Here is a 116-residue protein sequence, read N- to C-terminus: NADPH-dependent 7-cyano-7-deazaguanine reductase (116 aa).

Cys-31 (thioimide intermediate) is an active-site residue. Asp-38 serves as the catalytic Proton donor. Residues 53 to 55 (IEL) and 72 to 73 (YE) contribute to the substrate site.

This sequence belongs to the GTP cyclohydrolase I family. QueF type 1 subfamily.

It localises to the cytoplasm. The catalysed reaction is 7-aminomethyl-7-carbaguanine + 2 NADP(+) = 7-cyano-7-deazaguanine + 2 NADPH + 3 H(+). Its pathway is tRNA modification; tRNA-queuosine biosynthesis. Functionally, catalyzes the NADPH-dependent reduction of 7-cyano-7-deazaguanine (preQ0) to 7-aminomethyl-7-deazaguanine (preQ1). The protein is NADPH-dependent 7-cyano-7-deazaguanine reductase of Chlorobium luteolum (strain DSM 273 / BCRC 81028 / 2530) (Pelodictyon luteolum).